The following is a 252-amino-acid chain: Chitooligosaccharide deacetylase (252 aa).

Mg(2+) contacts are provided by His61 and His125.

Belongs to the YdjC deacetylase family. ChbG subfamily. In terms of assembly, homodimer. It depends on Mg(2+) as a cofactor.

Its subcellular location is the cytoplasm. The catalysed reaction is N,N'-diacetylchitobiose + H2O = N-acetyl-beta-D-glucosaminyl-(1-&gt;4)-D-glucosamine + acetate. It carries out the reaction diacetylchitobiose-6'-phosphate + H2O = N'-monoacetylchitobiose-6'-phosphate + acetate. It functions in the pathway glycan degradation; chitin degradation. In terms of biological role, involved in the degradation of chitin. ChbG is essential for growth on the acetylated chitooligosaccharides chitobiose and chitotriose but is dispensable for growth on cellobiose and chitosan dimer, the deacetylated form of chitobiose. Deacetylation of chitobiose-6-P and chitotriose-6-P is necessary for both the activation of the chb promoter by the regulatory protein ChbR and the hydrolysis of phosphorylated beta-glucosides by the phospho-beta-glucosidase ChbF. Catalyzes the removal of only one acetyl group from chitobiose-6-P to yield monoacetylchitobiose-6-P, the inducer of ChbR and the substrate of ChbF. The protein is Chitooligosaccharide deacetylase of Salmonella paratyphi B (strain ATCC BAA-1250 / SPB7).